A 141-amino-acid polypeptide reads, in one-letter code: Large ribosomal subunit protein uL11 (141 aa).

This sequence belongs to the universal ribosomal protein uL11 family. As to quaternary structure, part of the ribosomal stalk of the 50S ribosomal subunit. Interacts with L10 and the large rRNA to form the base of the stalk. L10 forms an elongated spine to which L12 dimers bind in a sequential fashion forming a multimeric L10(L12)X complex. One or more lysine residues are methylated.

Its function is as follows. Forms part of the ribosomal stalk which helps the ribosome interact with GTP-bound translation factors. The protein is Large ribosomal subunit protein uL11 of Thermotoga sp. (strain RQ2).